Reading from the N-terminus, the 2212-residue chain is RNA-directed RNA polymerase L (2212 aa).

The endonuclease stretch occupies residues 30 to 288 (KDALLSQVHP…SHEENDSLDC (259 aa)). Positions 55, 93, and 106 each coordinate Mn(2+). Residue K119 is part of the active site. Residues 922-942 (MKSSDAREERLQDPKRNEKNA) form a disordered region. Basic and acidic residues predominate over residues 923 to 942 (KSSDAREERLQDPKRNEKNA). One can recognise a RdRp catalytic domain in the interval 1175–1371 (CDMKMAVNNG…YLSSKLNKFV (197 aa)). Mg(2+) is bound at residue D1333.

This sequence belongs to the Bunyavirales RNA polymerase family. Homomultimer; the oligomeric structure is essential for the polymerase activity. Interacts with nucleoprotein N. Interacts with protein Z; this interaction inhibits viral transcription and replication, Z partially blocks the product exit tunnel for the releasing nascent RNA product. Mn(2+) serves as cofactor. Mg(2+) is required as a cofactor.

It localises to the virion. It is found in the host cytoplasm. It carries out the reaction RNA(n) + a ribonucleoside 5'-triphosphate = RNA(n+1) + diphosphate. Its function is as follows. RNA-dependent RNA polymerase, which is responsible for the replication and transcription of the viral RNA genome using antigenomic RNA as an intermediate. During transcription, synthesizes subgenomic RNAs and assures their capping by a cap-snatching mechanism, which involves the endonuclease activity cleaving the host capped pre-mRNAs. These short capped RNAs are then used as primers for viral transcription. The 3'-end of subgenomic mRNAs molecules are heterogeneous and not polyadenylated. The replicase function is to direct synthesis of antigenomic and genomic RNA which are encapsidated and non capped. As a consequence of the use of the same enzyme for both transcription and replication, these mechanisms need to be well coordinated. These processes may be regulated by proteins N and Z in a dose-dependent manner. Z protein inhibits the viral polymerase L und thus the viral transcription and RNA synthesis. In Sabia mammarenavirus (isolate Human/Brasil/SPH114202/1990) (SABV), this protein is RNA-directed RNA polymerase L.